We begin with the raw amino-acid sequence, 421 residues long: Serine hydroxymethyltransferase (421 aa).

Residues L121 and 125–127 (GHL) each bind (6S)-5,6,7,8-tetrahydrofolate. K230 is modified (N6-(pyridoxal phosphate)lysine). Residues E246 and 354–356 (SPF) contribute to the (6S)-5,6,7,8-tetrahydrofolate site.

This sequence belongs to the SHMT family. Homodimer. Pyridoxal 5'-phosphate serves as cofactor.

It is found in the cytoplasm. The catalysed reaction is (6R)-5,10-methylene-5,6,7,8-tetrahydrofolate + glycine + H2O = (6S)-5,6,7,8-tetrahydrofolate + L-serine. It functions in the pathway one-carbon metabolism; tetrahydrofolate interconversion. Its pathway is amino-acid biosynthesis; glycine biosynthesis; glycine from L-serine: step 1/1. Its function is as follows. Catalyzes the reversible interconversion of serine and glycine with tetrahydrofolate (THF) serving as the one-carbon carrier. This reaction serves as the major source of one-carbon groups required for the biosynthesis of purines, thymidylate, methionine, and other important biomolecules. Also exhibits THF-independent aldolase activity toward beta-hydroxyamino acids, producing glycine and aldehydes, via a retro-aldol mechanism. The polypeptide is Serine hydroxymethyltransferase (Rickettsia felis (strain ATCC VR-1525 / URRWXCal2) (Rickettsia azadi)).